The primary structure comprises 330 residues: Beta-ketoacyl-[acyl-carrier-protein] synthase III (330 aa).

Catalysis depends on residues Cys114 and His257. The segment at 258 to 262 is ACP-binding; the sequence is QANLR. Residue Asn287 is part of the active site.

Belongs to the thiolase-like superfamily. FabH family. As to quaternary structure, homodimer.

The protein resides in the cytoplasm. It carries out the reaction malonyl-[ACP] + acetyl-CoA + H(+) = 3-oxobutanoyl-[ACP] + CO2 + CoA. It functions in the pathway lipid metabolism; fatty acid biosynthesis. Functionally, catalyzes the condensation reaction of fatty acid synthesis by the addition to an acyl acceptor of two carbons from malonyl-ACP. Catalyzes the first condensation reaction which initiates fatty acid synthesis and may therefore play a role in governing the total rate of fatty acid production. Possesses both acetoacetyl-ACP synthase and acetyl transacylase activities. Its substrate specificity determines the biosynthesis of branched-chain and/or straight-chain of fatty acids. This is Beta-ketoacyl-[acyl-carrier-protein] synthase III from Oleidesulfovibrio alaskensis (strain ATCC BAA-1058 / DSM 17464 / G20) (Desulfovibrio alaskensis).